Reading from the N-terminus, the 381-residue chain is Cytochrome P450 105C1 (381 aa).

Cys330 serves as a coordination point for heme.

This sequence belongs to the cytochrome P450 family. It depends on heme as a cofactor.

The protein localises to the cytoplasm. The sequence is that of Cytochrome P450 105C1 (cyp105C1) from Streptomyces sp.